The chain runs to 89 residues: Small ribosomal subunit protein uS15 (89 aa).

This sequence belongs to the universal ribosomal protein uS15 family. As to quaternary structure, part of the 30S ribosomal subunit. Forms a bridge to the 50S subunit in the 70S ribosome, contacting the 23S rRNA.

One of the primary rRNA binding proteins, it binds directly to 16S rRNA where it helps nucleate assembly of the platform of the 30S subunit by binding and bridging several RNA helices of the 16S rRNA. Its function is as follows. Forms an intersubunit bridge (bridge B4) with the 23S rRNA of the 50S subunit in the ribosome. The protein is Small ribosomal subunit protein uS15 of Alcanivorax borkumensis (strain ATCC 700651 / DSM 11573 / NCIMB 13689 / SK2).